The chain runs to 453 residues: DNA repair protein RadA (453 aa).

A C4-type zinc finger spans residues Cys-10–Cys-27. Gly-96–Ser-103 is a binding site for ATP. A RadA KNRFG motif motif is present at residues Lys-252–Gly-256. Residues Asp-351 to Glu-453 form a lon-protease-like region.

This sequence belongs to the RecA family. RadA subfamily.

DNA-dependent ATPase involved in processing of recombination intermediates, plays a role in repairing DNA breaks. Stimulates the branch migration of RecA-mediated strand transfer reactions, allowing the 3' invading strand to extend heteroduplex DNA faster. Binds ssDNA in the presence of ADP but not other nucleotides, has ATPase activity that is stimulated by ssDNA and various branched DNA structures, but inhibited by SSB. Does not have RecA's homology-searching function. The protein is DNA repair protein RadA of Pseudomonas aeruginosa (strain ATCC 15692 / DSM 22644 / CIP 104116 / JCM 14847 / LMG 12228 / 1C / PRS 101 / PAO1).